A 305-amino-acid polypeptide reads, in one-letter code: Methionyl-tRNA formyltransferase (305 aa).

111–114 is a binding site for (6S)-5,6,7,8-tetrahydrofolate; it reads SLLP.

The protein belongs to the Fmt family.

The catalysed reaction is L-methionyl-tRNA(fMet) + (6R)-10-formyltetrahydrofolate = N-formyl-L-methionyl-tRNA(fMet) + (6S)-5,6,7,8-tetrahydrofolate + H(+). Its function is as follows. Attaches a formyl group to the free amino group of methionyl-tRNA(fMet). The formyl group appears to play a dual role in the initiator identity of N-formylmethionyl-tRNA by promoting its recognition by IF2 and preventing the misappropriation of this tRNA by the elongation apparatus. The sequence is that of Methionyl-tRNA formyltransferase from Campylobacter jejuni (strain RM1221).